We begin with the raw amino-acid sequence, 317 residues long: L-lactate dehydrogenase 1 (317 aa).

NAD(+) is bound by residues valine 17, aspartate 38, lysine 43, tyrosine 69, and 83 to 84; that span reads GA. Residues glutamine 86 and arginine 92 each contribute to the substrate site. Residues serine 105, 122-124, and serine 147 each bind NAD(+); that span reads ATN. 124–127 is a substrate binding site; the sequence is NPVD. Residue 152–155 participates in substrate binding; sequence DSAR. Histidine 179 acts as the Proton acceptor in catalysis. Tyrosine 223 is modified (phosphotyrosine). Threonine 232 serves as a coordination point for substrate.

The protein belongs to the LDH/MDH superfamily. LDH family. As to quaternary structure, homotetramer.

It localises to the cytoplasm. The catalysed reaction is (S)-lactate + NAD(+) = pyruvate + NADH + H(+). It functions in the pathway fermentation; pyruvate fermentation to lactate; (S)-lactate from pyruvate: step 1/1. Its function is as follows. Catalyzes the conversion of lactate to pyruvate (Potential). Appears to be the primary factor that allows S.aureus growth during nitrosative stress in both aerobically and anaerobically cultured cells. The sequence is that of L-lactate dehydrogenase 1 from Staphylococcus aureus (strain USA300).